The following is a 154-amino-acid chain: Regulatory protein RecX (154 aa).

It belongs to the RecX family.

The protein localises to the cytoplasm. Modulates RecA activity. The polypeptide is Regulatory protein RecX (Trichlorobacter lovleyi (strain ATCC BAA-1151 / DSM 17278 / SZ) (Geobacter lovleyi)).